The following is a 75-amino-acid chain: RNA-binding protein KhpA (75 aa).

Positions 29–75 constitute a KH domain; it reads SIILELKVSPEDMGKVIGKQGRIAKAIRTVVKAAAIKENKKVVVEII.

The protein belongs to the KhpA RNA-binding protein family. As to quaternary structure, forms a complex with KhpB.

Its subcellular location is the cytoplasm. A probable RNA chaperone. Forms a complex with KhpB which binds to cellular RNA and controls its expression. Plays a role in peptidoglycan (PG) homeostasis and cell length regulation. This chain is RNA-binding protein KhpA, found in Clostridium perfringens (strain 13 / Type A).